The primary structure comprises 121 residues: Small ribosomal subunit protein uS13 (121 aa).

A disordered region spans residues H91 to K121. Basic residues predominate over residues A106–K121.

Belongs to the universal ribosomal protein uS13 family. In terms of assembly, part of the 30S ribosomal subunit. Forms a loose heterodimer with protein S19. Forms two bridges to the 50S subunit in the 70S ribosome.

In terms of biological role, located at the top of the head of the 30S subunit, it contacts several helices of the 16S rRNA. In the 70S ribosome it contacts the 23S rRNA (bridge B1a) and protein L5 of the 50S subunit (bridge B1b), connecting the 2 subunits; these bridges are implicated in subunit movement. Contacts the tRNAs in the A and P-sites. This Listeria welshimeri serovar 6b (strain ATCC 35897 / DSM 20650 / CCUG 15529 / CIP 8149 / NCTC 11857 / SLCC 5334 / V8) protein is Small ribosomal subunit protein uS13.